Here is a 472-residue protein sequence, read N- to C-terminus: Serine/threonine-protein kinase ULK3 (472 aa).

The 257-residue stretch at 14-270 (FILTERLGSG…FQDFFAHPWV (257 aa)) folds into the Protein kinase domain. Residues 20–28 (LGSGTYATV) and lysine 44 each bind ATP. Aspartate 137 acts as the Proton acceptor in catalysis. At serine 176 the chain carries Phosphoserine. The MIT 1 domain maps to 281–347 (LAQATALVVE…VSRAEELKAI (67 aa)). 2 positions are modified to phosphoserine; by autocatalysis: serine 350 and serine 384. Positions 376–444 (LLAALEVASA…ARAEYLKEQI (69 aa)) constitute an MIT 2 domain. Serine 464 is subject to Phosphoserine.

This sequence belongs to the protein kinase superfamily. Ser/Thr protein kinase family. APG1/unc-51/ULK1 subfamily. As to quaternary structure, interacts (via protein kinase domain) with SUFU. Autophosphorylated. Autophosphorylation is blocked by interaction with SUFU.

The protein resides in the cytoplasm. The catalysed reaction is L-seryl-[protein] + ATP = O-phospho-L-seryl-[protein] + ADP + H(+). The enzyme catalyses L-threonyl-[protein] + ATP = O-phospho-L-threonyl-[protein] + ADP + H(+). In terms of biological role, serine/threonine protein kinase that acts as a regulator of Sonic hedgehog (SHH) signaling and autophagy. Acts as a negative regulator of SHH signaling in the absence of SHH ligand: interacts with SUFU, thereby inactivating the protein kinase activity and preventing phosphorylation of GLI proteins (GLI1, GLI2 and/or GLI3). Positively regulates SHH signaling in the presence of SHH: dissociates from SUFU, autophosphorylates and mediates phosphorylation of GLI2, activating it and promoting its nuclear translocation. Phosphorylates in vitro GLI2, as well as GLI1 and GLI3, although less efficiently. Also acts as a regulator of autophagy: following cellular senescence, able to induce autophagy. The sequence is that of Serine/threonine-protein kinase ULK3 (Ulk3) from Rattus norvegicus (Rat).